A 217-amino-acid chain; its full sequence is Meiotic expression up-regulated protein 29 (217 aa).

The signal sequence occupies residues 1-21 (MFVVKTAVLLFFALFIGNTYA). Residues 22–133 (YTYSLDRIQA…SGVLLHRPWK (112 aa)) are Extracellular-facing. Asn84 carries N-linked (GlcNAc...) asparagine glycosylation. The chain crosses the membrane as a helical span at residues 134-154 (LFSLKPFTAAFVLLLAASYLA). Over 155 to 217 (TACFRMLGYL…VPVPVLDESV (63 aa)) the chain is Cytoplasmic.

The protein resides in the membrane. In Schizosaccharomyces pombe (strain 972 / ATCC 24843) (Fission yeast), this protein is Meiotic expression up-regulated protein 29 (meu29).